A 304-amino-acid chain; its full sequence is Glutaminase (304 aa).

Substrate is bound by residues serine 63, asparagine 114, glutamate 158, asparagine 165, tyrosine 189, tyrosine 240, and valine 258.

This sequence belongs to the glutaminase family. Homotetramer.

The enzyme catalyses L-glutamine + H2O = L-glutamate + NH4(+). This is Glutaminase from Shewanella baltica (strain OS155 / ATCC BAA-1091).